The sequence spans 700 residues: ABC transporter B family member 26, chloroplastic (700 aa).

The N-terminal 59 residues, M1 to N59, are a transit peptide targeting the chloroplast. 3 helical membrane-spanning segments follow: residues W137–P157, L182–I202, and L268–I288. In terms of domain architecture, ABC transmembrane type-1 spans I139–Q421. Positions I455–R694 constitute an ABC transporter domain. Position 490–497 (G490–S497) interacts with ATP.

The protein belongs to the ABC transporter superfamily. ABCB family. Multidrug resistance exporter (TC 3.A.1.201) subfamily.

It localises to the plastid. The protein resides in the chloroplast membrane. This Arabidopsis thaliana (Mouse-ear cress) protein is ABC transporter B family member 26, chloroplastic (ABCB26).